We begin with the raw amino-acid sequence, 682 residues long: Methionine--tRNA ligase (682 aa).

The short motif at 14–24 (PYANGSIHLGH) is the 'HIGH' region element. Residues Cys145, Cys148, Cys158, and Cys161 each contribute to the Zn(2+) site. The 'KMSKS' region motif lies at 331–335 (KMSKS). Lys334 contacts ATP. A tRNA-binding domain is found at 580–682 (AFAAIDLRVA…SGARPGQRIK (103 aa)).

This sequence belongs to the class-I aminoacyl-tRNA synthetase family. MetG type 1 subfamily. Homodimer. It depends on Zn(2+) as a cofactor.

It is found in the cytoplasm. It catalyses the reaction tRNA(Met) + L-methionine + ATP = L-methionyl-tRNA(Met) + AMP + diphosphate. In terms of biological role, is required not only for elongation of protein synthesis but also for the initiation of all mRNA translation through initiator tRNA(fMet) aminoacylation. The protein is Methionine--tRNA ligase of Pseudomonas syringae pv. syringae (strain B728a).